A 668-amino-acid polypeptide reads, in one-letter code: Fructose-1,6-bisphosphatase class 3 (668 aa).

The protein belongs to the FBPase class 3 family. Mn(2+) serves as cofactor.

The catalysed reaction is beta-D-fructose 1,6-bisphosphate + H2O = beta-D-fructose 6-phosphate + phosphate. It participates in carbohydrate biosynthesis; gluconeogenesis. This is Fructose-1,6-bisphosphatase class 3 from Clostridium botulinum (strain Kyoto / Type A2).